We begin with the raw amino-acid sequence, 38 residues long: Large ribosomal subunit protein bL36 (38 aa).

This sequence belongs to the bacterial ribosomal protein bL36 family.

The protein is Large ribosomal subunit protein bL36 of Paraburkholderia phymatum (strain DSM 17167 / CIP 108236 / LMG 21445 / STM815) (Burkholderia phymatum).